The following is a 66-amino-acid chain: U-scoloptoxin(04)-Ssd2a (66 aa).

An N-terminal signal peptide occupies residues 1–19 (MKAIYILSVLLLMMLPILS).

It belongs to the scoloptoxin-04 family. Contains 2 disulfide bonds. Expressed by the venom gland.

The protein localises to the secreted. The sequence is that of U-scoloptoxin(04)-Ssd2a from Scolopendra dehaani (Thai centipede).